A 475-amino-acid chain; its full sequence is Nucleoporin-like protein amo1 (475 aa).

The C3H1-type zinc-finger motif lies at 1 to 25 (MVVCKYFLQNRCRYGTNCKNQHTVP). The span at 165-182 (DKSTSNSTVTSNQFNKPT) shows a compositional bias: polar residues. Disordered stretches follow at residues 165 to 208 (DKST…DIFG) and 220 to 252 (NASPFSQNTSSNSFTGSNPVQNNPSSFGSSSFG). Residues 183–204 (QNSPFNSFSNNNNSFNNNQQAN) are compositionally biased toward low complexity. Over residues 220 to 242 (NASPFSQNTSSNSFTGSNPVQNN) the composition is skewed to polar residues. Over residues 243-252 (PSSFGSSSFG) the composition is skewed to low complexity.

Its subcellular location is the nucleus. Functionally, involved in the cell polarity process where it is required for the correct termination of microtubule growth at the cell ends during interphase. The polypeptide is Nucleoporin-like protein amo1 (amo1) (Schizosaccharomyces pombe (strain 972 / ATCC 24843) (Fission yeast)).